Reading from the N-terminus, the 608-residue chain is 65-kDa microtubule-associated protein 6 (608 aa).

Coiled coils occupy residues 164–186, 368–388, and 467–503; these read DLTLRNLNEYQTHLRTLQKEKSD, ELLANIEMQINKIKDEAQSRK, and VRLVNILEDYKLTRKQQEEEKKRYRDQKKRQDLLLTQ. The segment at 501 to 565 is disordered; it reads LTQRESIYGS…RSYSGHHRQN (65 aa). The span at 510–523 shows a compositional bias: low complexity; sequence SKPSPRRSSSFRKP. Ser-513 bears the Phosphoserine mark. Residues 526-535 show a composition bias toward polar residues; sequence FNISNGNGSV. Position 604 is a phosphoserine (Ser-604).

Belongs to the MAP65/ASE1 family. As to quaternary structure, forms a dimer. Binds to polymerized centrally located endocytic MT.

The protein localises to the nucleus. The protein resides in the cytoplasm. It is found in the mitochondrion. Its subcellular location is the cytoskeleton. It localises to the phragmoplast. In terms of biological role, microtubule-associated protein that mediates the formation of a mesh-like stable and dense network formed by individual microtubules (MT). Confers MT resistance to high concentration of NaCl. The protein is 65-kDa microtubule-associated protein 6 (MAP65-6) of Arabidopsis thaliana (Mouse-ear cress).